The primary structure comprises 100 residues: C-X-C motif chemokine 11 (100 aa).

The N-terminal stretch at 1–21 (MNRKVTAIALAAIIWATAAQG) is a signal peptide. Intrachain disulfides connect Cys-30–Cys-57 and Cys-32–Cys-74.

This sequence belongs to the intercrine alpha (chemokine CxC) family. As to quaternary structure, interacts with TNFAIP6 (via Link domain).

The protein localises to the secreted. In terms of biological role, chemotactic for interleukin-activated T-cells but not unstimulated T-cells, neutrophils or monocytes. Induces calcium release in activated T-cells. Binds to CXCR3. May play an important role in CNS diseases which involve T-cell recruitment. May play a role in skin immune responses. This is C-X-C motif chemokine 11 (Cxcl11) from Mus musculus (Mouse).